The chain runs to 336 residues: tRNA N6-adenosine threonylcarbamoyltransferase (336 aa).

2 residues coordinate Fe cation: H114 and H118. Substrate is bound by residues 136–140 (LVSGG), D169, G182, D186, and N275. Residue D301 participates in Fe cation binding.

The protein belongs to the KAE1 / TsaD family. Requires Fe(2+) as cofactor.

It is found in the cytoplasm. The enzyme catalyses L-threonylcarbamoyladenylate + adenosine(37) in tRNA = N(6)-L-threonylcarbamoyladenosine(37) in tRNA + AMP + H(+). Required for the formation of a threonylcarbamoyl group on adenosine at position 37 (t(6)A37) in tRNAs that read codons beginning with adenine. Is involved in the transfer of the threonylcarbamoyl moiety of threonylcarbamoyl-AMP (TC-AMP) to the N6 group of A37, together with TsaE and TsaB. TsaD likely plays a direct catalytic role in this reaction. In Streptococcus pneumoniae (strain Hungary19A-6), this protein is tRNA N6-adenosine threonylcarbamoyltransferase.